The sequence spans 458 residues: Argininosuccinate lyase (458 aa).

This sequence belongs to the lyase 1 family. Argininosuccinate lyase subfamily.

The protein localises to the cytoplasm. It catalyses the reaction 2-(N(omega)-L-arginino)succinate = fumarate + L-arginine. The protein operates within amino-acid biosynthesis; L-arginine biosynthesis; L-arginine from L-ornithine and carbamoyl phosphate: step 3/3. The sequence is that of Argininosuccinate lyase from Geobacter sulfurreducens (strain ATCC 51573 / DSM 12127 / PCA).